Here is a 380-residue protein sequence, read N- to C-terminus: MAKKVAICTLLYSRDYLPGALTLAYQLQKLLKHAVVEDEITLCLLIEKKLFEDEFKPQEIALIRSLFKEIIIIEPLKDQEKSIEKNKANLELLKRPELSHTLLKARLWELVQFDQVLFLDADTLPLNKDFFEILRLYPEQTRFQIAAVPDIGWPDMFNTGVLLLIPDLDMATSLQDFLIKTVSIDGADQGIFNQFFNPICNYSKEVLHKVSPLMEWIRLPFTYNVTMPNYGYQSSPAMNFFQQHIRLIHFIGTFKPWSRNTTDYDDHYYQLWRSTQRELYSECHLSNYFTHLQLGNIETETNFYHEPPCLQDLLNHGTRENQKHVDLDITSVDRNASQKSTAEKHDIEKPTSKPQSAFKFDWESTDYLDRVQRAFPKPDT.

UDP contacts are provided by Leu10, Tyr16, and Arg95. The UDP-alpha-D-glucose site is built by Leu10, Tyr16, Arg95, Lys104, Asp120, Ala121, Asp122, Asn158, Thr159, Asp185, Asp188, and Gln189. Residues Asp120, Ala121, and Asp122 each contribute to the UDP site. Asp120 contacts Mn(2+). Asp122 lines the Mn(2+) pocket. O-linked (Glc...) tyrosine glycans are attached at residues Tyr230 and Tyr232. Residues His249, Gly252, and Lys255 each contribute to the UDP site. Mn(2+) is bound at residue His249. The UDP-alpha-D-glucose site is built by Gly252 and Lys255. Positions 331-357 (SVDRNASQKSTAEKHDIEKPTSKPQSA) are disordered. Residues 341 to 351 (TAEKHDIEKPT) show a composition bias toward basic and acidic residues. Tyr367 carries O-linked (Glc...) tyrosine glycosylation.

The protein belongs to the glycosyltransferase 8 family. Glycogenin subfamily. In terms of assembly, interacts with glycogen synthase GSY2. Mn(2+) is required as a cofactor.

Its subcellular location is the cytoplasm. The protein localises to the vacuole. It catalyses the reaction L-tyrosyl-[glycogenin] + UDP-alpha-D-glucose = alpha-D-glucosyl-L-tyrosyl-[glycogenin] + UDP + H(+). It carries out the reaction [1,4-alpha-D-glucosyl](n)-L-tyrosyl-[glycogenin] + UDP-alpha-D-glucose = [1,4-alpha-D-glucosyl](n+1)-L-tyrosyl-[glycogenin] + UDP + H(+). Functionally, self-glucosylating initiator of glycogen synthesis. It catalyzes the formation of a short alpha (1,4)-glucosyl chain covalently attached via a glucose 1-O-tyrosyl linkage to internal tyrosine residues and these chains act as primers for the elongation reaction catalyzed by glycogen synthase. Capable of transferring glucosyl residues to unbound acceptors such as free oligoglucans or oligoglucan derivatives. The protein is Glycogenin-2 (GLG2) of Saccharomyces cerevisiae (strain YJM789) (Baker's yeast).